Here is a 185-residue protein sequence, read N- to C-terminus: Ribosome-recycling factor (185 aa).

The protein belongs to the RRF family.

Its subcellular location is the cytoplasm. Responsible for the release of ribosomes from messenger RNA at the termination of protein biosynthesis. May increase the efficiency of translation by recycling ribosomes from one round of translation to another. The protein is Ribosome-recycling factor of Vibrio cholerae serotype O1 (strain ATCC 39541 / Classical Ogawa 395 / O395).